The sequence spans 224 residues: Late embryogenesis abundant protein, group 3 (224 aa).

2 disordered regions span residues 1-169 and 193-224; these read MASN…KDKT and NTLG…TRNH. The segment covering 13-23 has biased composition (basic and acidic residues); the sequence is GETKARNEEKT. A run of 5 repeats spans residues 26–36, 37–47, 48–58, 59–69, and 70–80. The interval 26–153 is 12 X 11 AA tandem repeats; it reads VMGATKDKAG…TEAAKQKASE (128 aa). Basic and acidic residues-rich tracts occupy residues 41 to 85, 92 to 109, and 120 to 151; these read TKQK…KDKT, AKEK…RAAQ, and EKTE…KQKA. Residues 81 to 87 form a 6; truncated repeat; that stretch reads AKDKTAQ. 5 tandem repeats follow at residues 88–98, 99–109, 121–131, 132–142, and 143–153. A compositionally biased stretch (low complexity) spans 200–224; the sequence is DNTITTKDNTTGATTKDTTTTTRNH.

This sequence belongs to the LEA type 4 family.

The chain is Late embryogenesis abundant protein, group 3 from Triticum aestivum (Wheat).